The sequence spans 182 residues: Photosystem I assembly protein Ycf4 (182 aa).

2 helical membrane passes run 22 to 42 (WAIIIGSGGLGFLFTGLSSYL) and 66 to 86 (FYGILGIFFSLYLGLTILFSV).

The protein belongs to the Ycf4 family.

The protein localises to the plastid. It is found in the chloroplast thylakoid membrane. In terms of biological role, seems to be required for the assembly of the photosystem I complex. In Tupiella akineta (Green alga), this protein is Photosystem I assembly protein Ycf4.